Reading from the N-terminus, the 381-residue chain is Lipid-A-disaccharide synthase (381 aa).

The protein belongs to the LpxB family.

It carries out the reaction 2-N,3-O-bis[(3R)-3-hydroxytetradecanoyl]-alpha-D-glucosaminyl 1-phosphate + UDP-2-N,3-O-bis[(3R)-3-hydroxytetradecanoyl]-alpha-D-glucosamine = lipid A disaccharide (E. coli) + UDP + H(+). It catalyses the reaction a lipid X + a UDP-2-N,3-O-bis[(3R)-3-hydroxyacyl]-alpha-D-glucosamine = a lipid A disaccharide + UDP + H(+). Its pathway is glycolipid biosynthesis; lipid IV(A) biosynthesis; lipid IV(A) from (3R)-3-hydroxytetradecanoyl-[acyl-carrier-protein] and UDP-N-acetyl-alpha-D-glucosamine: step 5/6. Functionally, condensation of UDP-2,3-diacylglucosamine and 2,3-diacylglucosamine-1-phosphate to form lipid A disaccharide, a precursor of lipid A, a phosphorylated glycolipid that anchors the lipopolysaccharide to the outer membrane of the cell. The chain is Lipid-A-disaccharide synthase from Erwinia tasmaniensis (strain DSM 17950 / CFBP 7177 / CIP 109463 / NCPPB 4357 / Et1/99).